A 255-amino-acid polypeptide reads, in one-letter code: Hydroxyacylglutathione hydrolase (255 aa).

Zn(2+) is bound by residues His55, His57, Asp59, His60, His111, Asp131, and His169.

Belongs to the metallo-beta-lactamase superfamily. Glyoxalase II family. In terms of assembly, monomer. Zn(2+) is required as a cofactor.

The enzyme catalyses an S-(2-hydroxyacyl)glutathione + H2O = a 2-hydroxy carboxylate + glutathione + H(+). It functions in the pathway secondary metabolite metabolism; methylglyoxal degradation; (R)-lactate from methylglyoxal: step 2/2. Its function is as follows. Thiolesterase that catalyzes the hydrolysis of S-D-lactoyl-glutathione to form glutathione and D-lactic acid. The chain is Hydroxyacylglutathione hydrolase from Chromohalobacter salexigens (strain ATCC BAA-138 / DSM 3043 / CIP 106854 / NCIMB 13768 / 1H11).